Here is a 351-residue protein sequence, read N- to C-terminus: Fe(3+) ions import ATP-binding protein FbpC (351 aa).

One can recognise an ABC transporter domain in the interval 7 to 237 (VELKNVTKRF…PASEFMASFM (231 aa)). 39–46 (GPSGCGKT) contacts ATP.

It belongs to the ABC transporter superfamily. Fe(3+) ion importer (TC 3.A.1.10) family. As to quaternary structure, the complex is composed of two ATP-binding proteins (FbpC), two transmembrane proteins (FbpB) and a solute-binding protein (FbpA).

It localises to the cell inner membrane. It carries out the reaction Fe(3+)(out) + ATP + H2O = Fe(3+)(in) + ADP + phosphate + H(+). Part of the ABC transporter complex FbpABC involved in Fe(3+) ions import. Responsible for energy coupling to the transport system. This Photorhabdus laumondii subsp. laumondii (strain DSM 15139 / CIP 105565 / TT01) (Photorhabdus luminescens subsp. laumondii) protein is Fe(3+) ions import ATP-binding protein FbpC.